The chain runs to 2021 residues: HEAT repeat-containing protein 5A (2021 aa).

2 HEAT repeats span residues 795-836 (SQRP…HLAS) and 1059-1096 (VNLSSLVPTLCVHLYSPHLPLRRAVLACLRQLAQREAA). Disordered stretches follow at residues 1503–1528 (EGNGHLSRPVTPTSMGQERGSQLPAD) and 1989–2012 (RGNQESLKPKAPSRGTMGGGHGSP). Polar residues predominate over residues 1512–1522 (VTPTSMGQERG).

The protein belongs to the HEATR5 family.

This Xenopus tropicalis (Western clawed frog) protein is HEAT repeat-containing protein 5A (heatr5a).